Here is a 549-residue protein sequence, read N- to C-terminus: Glucose-6-phosphate isomerase (549 aa).

The active-site Proton donor is the glutamate 355. Residues histidine 387 and lysine 515 contribute to the active site.

This sequence belongs to the GPI family.

It localises to the cytoplasm. The catalysed reaction is alpha-D-glucose 6-phosphate = beta-D-fructose 6-phosphate. It functions in the pathway carbohydrate biosynthesis; gluconeogenesis. Its pathway is carbohydrate degradation; glycolysis; D-glyceraldehyde 3-phosphate and glycerone phosphate from D-glucose: step 2/4. Catalyzes the reversible isomerization of glucose-6-phosphate to fructose-6-phosphate. In Haemophilus influenzae (strain PittEE), this protein is Glucose-6-phosphate isomerase.